A 209-amino-acid chain; its full sequence is Aspartate kinase-like protein lolA1 (209 aa).

The span at 1–11 (MLDESPMRKGD) shows a compositional bias: basic and acidic residues. The interval 1-27 (MLDESPMRKGDSVSNDQSNPESNASVS) is disordered. A compositionally biased stretch (polar residues) spans 12 to 27 (SVSNDQSNPESNASVS).

Belongs to the aspartokinase family.

It participates in alkaloid biosynthesis. Aspartokinase-like protein; part of the gene cluster that mediates the biosynthesis of loline alkaloids, potent insecticidal agents composed of a pyrrolizidine ring system and an uncommon ether bridge linking carbons 2 and 7. Lolines are structurally differentiated by the various modifications of the L-amino group and include norloline, loline, N-methylloline, N-acetylloline, N-acetylnorloline, and N-formylloline. The first committed step is the condensation of O-acetyl-L-homoserine (derived from L-aspartic acid) and L-proline, probably catalyzed by the gamma-type pyridoxal 5'-phosphate(PLP)-dependent enzyme lolC, to give the diamino diacid, NACPP. Ensuing cyclization, decarboxylation, and acetylation steps yield 1-exo-acetamidopyrrolizidine (AcAP). LolO is required for installation of the ether bridge upon the pathway intermediate, 1-exo-acetamidopyrrolizidine (AcAP). In sequential 2-oxoglutarate- and O(2)-consuming steps, lolO removes hydrogens from C2 and C7 of AcAP to form both carbon-oxygen bonds in N-acetylnorloline (NANL), the precursor to all other lolines. The enzymes lolD, lolE, lolF and lolT have also been proposed to be involved in the ether-bridge installation. Further processing of the exocyclic moiety of NANL by fungal N-acetamidase (LolN), methyltransferase (LolM), and cytochrome P450 (LolP) enzymes, with occasional involvement of a plant acetyltransferase, generates the other known lolines. LolN transforms NANL to norlonine which is monomethylated and dimethylated to respectively lonine and N-methyllonine (NML) by lolM. LolP catalyzes hydroxylation of the methyl group in N-methylloline (NML) and further oxygenation to N-formylloline (NFL). A plant acetyltransferase is responsible for the acetylation of loline to form N-acetylloline (NAL). LolA might interact with aspartate kinase to prevent feedback inhibition of its activity by these end products and thereby promote production of L-homoserine from L-aspartate. This is Aspartate kinase-like protein lolA1 from Epichloe uncinata (Endophyte fungus).